We begin with the raw amino-acid sequence, 413 residues long: Transmembrane protein 237B (413 aa).

The disordered stretch occupies residues 1–162 (MDPEAKVSSS…EDDDVITDPQ (162 aa)). Residues 112–122 (DLVSNGDTLDQ) show a composition bias toward polar residues. Helical transmembrane passes span 233–253 (VIGL…IIVV), 274–294 (LAYP…VSAF), 312–332 (LSPV…SLSQ), and 360–380 (ILYP…LAWI).

The protein belongs to the TMEM237 family.

It localises to the membrane. Its subcellular location is the cell projection. It is found in the cilium. Functionally, component of the transition zone in primary cilia. Required for ciliogenesis. The sequence is that of Transmembrane protein 237B (tmem237b) from Danio rerio (Zebrafish).